The chain runs to 429 residues: Adenosylmethionine-8-amino-7-oxononanoate aminotransferase (429 aa).

Trp52 contacts substrate. Residue 112–113 (GS) participates in pyridoxal 5'-phosphate binding. Tyr144 lines the substrate pocket. Pyridoxal 5'-phosphate is bound at residue Asp245. The substrate site is built by Lys274 and Gly307. At Lys274 the chain carries N6-(pyridoxal phosphate)lysine. 308 to 309 (PT) serves as a coordination point for pyridoxal 5'-phosphate. A substrate-binding site is contributed by Arg391.

It belongs to the class-III pyridoxal-phosphate-dependent aminotransferase family. BioA subfamily. As to quaternary structure, homodimer. Pyridoxal 5'-phosphate serves as cofactor.

The protein resides in the cytoplasm. The catalysed reaction is (8S)-8-amino-7-oxononanoate + S-adenosyl-L-methionine = S-adenosyl-4-methylsulfanyl-2-oxobutanoate + (7R,8S)-7,8-diammoniononanoate. Its pathway is cofactor biosynthesis; biotin biosynthesis; 7,8-diaminononanoate from 8-amino-7-oxononanoate (SAM route): step 1/1. Catalyzes the transfer of the alpha-amino group from S-adenosyl-L-methionine (SAM) to 7-keto-8-aminopelargonic acid (KAPA) to form 7,8-diaminopelargonic acid (DAPA). It is the only aminotransferase known to utilize SAM as an amino donor. The protein is Adenosylmethionine-8-amino-7-oxononanoate aminotransferase of Buchnera aphidicola subsp. Baizongia pistaciae (strain Bp).